A 347-amino-acid polypeptide reads, in one-letter code: Quinolinate synthase (347 aa).

His-47 and Ser-68 together coordinate iminosuccinate. Residue Cys-113 participates in [4Fe-4S] cluster binding. Residues 139–141 and Ser-156 each bind iminosuccinate; that span reads YAN. Residue Cys-200 participates in [4Fe-4S] cluster binding. Iminosuccinate is bound by residues 226–228 and Thr-243; that span reads HPE. A [4Fe-4S] cluster-binding site is contributed by Cys-297.

It belongs to the quinolinate synthase family. Type 1 subfamily. [4Fe-4S] cluster is required as a cofactor.

Its subcellular location is the cytoplasm. It catalyses the reaction iminosuccinate + dihydroxyacetone phosphate = quinolinate + phosphate + 2 H2O + H(+). The protein operates within cofactor biosynthesis; NAD(+) biosynthesis; quinolinate from iminoaspartate: step 1/1. Catalyzes the condensation of iminoaspartate with dihydroxyacetone phosphate to form quinolinate. In Salmonella agona (strain SL483), this protein is Quinolinate synthase.